Here is a 404-residue protein sequence, read N- to C-terminus: Putative transporter AmpG 2 (404 aa).

A run of 12 helical transmembrane segments spans residues I11–T31, I49–L69, Y84–N104, F109–L129, F154–W174, V177–L197, W224–M244, L261–L281, V294–Y311, I315–F337, I353–Y373, and L378–I398.

Belongs to the major facilitator superfamily.

The protein localises to the cell inner membrane. The polypeptide is Putative transporter AmpG 2 (ampG2) (Rickettsia bellii (strain RML369-C)).